The following is a 347-amino-acid chain: Monopolin complex subunit LRS4 (347 aa).

Residues 46–118 (KKVVDETLFL…QISVDKHNKE (73 aa)) are a coiled coil. The segment covering 112–130 (VDKHNKERTPSTGRDEQQR) has biased composition (basic and acidic residues). Disordered stretches follow at residues 112–183 (VDKH…SLLS) and 208–230 (RNDTTSSKIAGKSPSRLSALQKS). Composition is skewed to polar residues over residues 131 to 140 (NSKAAHTSKP) and 155 to 172 (NNQTNDRGGNDPDSPTSQ). A phosphoserine mark is found at S168 and S230.

Component of the monopolin complex composed of at least CSM1, LRS4 and MAM1. The complex associates with the kinetochore. In terms of processing, phosphorylated by CDC5. This phosphorylation is required for the location to the kinetochores during late pachytene.

It localises to the nucleus. Its subcellular location is the nucleolus. The protein resides in the chromosome. It is found in the centromere. Functionally, component of the monopolin complex which promotes monoorientation during meiosis I, required for chromosome segregation during meiosis. Involved in rDNA silencing. In Saccharomyces cerevisiae (strain ATCC 204508 / S288c) (Baker's yeast), this protein is Monopolin complex subunit LRS4 (LRS4).